Here is a 187-residue protein sequence, read N- to C-terminus: MATTADFKNGLVLVIDGQLWTIIGFQHVKPGKGPAFVRTKLKNVLSGKVVDKTYNAGVKVDTATVDRRDTTYLYRDGANFVFMDSQDYEQHPLPESLVGDTARFLLEGMSVQVAFHNGVPLYVELPVTVELEVTHTEPGLQGDRSSAGTKPATLETGAQINVPLFINTGDKLKVDSRDGSYLGRVNV.

It belongs to the elongation factor P family.

The protein resides in the cytoplasm. It participates in protein biosynthesis; polypeptide chain elongation. Involved in peptide bond synthesis. Stimulates efficient translation and peptide-bond synthesis on native or reconstituted 70S ribosomes in vitro. Probably functions indirectly by altering the affinity of the ribosome for aminoacyl-tRNA, thus increasing their reactivity as acceptors for peptidyl transferase. This Mycobacterium leprae (strain Br4923) protein is Elongation factor P.